The primary structure comprises 212 residues: Putative tyrosine-protein phosphatase OCA1 (212 aa).

A disordered region spans residues 1–27; sequence MSNKDTSILKGNVDHEEADSNPKLRKI. Positions 12–22 are enriched in basic and acidic residues; sequence NVDHEEADSNP. Residues 40-208 form the Tyrosine-protein phosphatase domain; it reads NFCPVERQLY…SVEIDPSKVP (169 aa). C146 serves as the catalytic Phosphocysteine intermediate.

This sequence belongs to the protein-tyrosine phosphatase family.

Its subcellular location is the cytoplasm. It catalyses the reaction O-phospho-L-tyrosyl-[protein] + H2O = L-tyrosyl-[protein] + phosphate. Its function is as follows. Putative tyrosine-protein phosphatase required for protection against superoxide stress. The sequence is that of Putative tyrosine-protein phosphatase OCA1 (OCA1) from Scheffersomyces stipitis (strain ATCC 58785 / CBS 6054 / NBRC 10063 / NRRL Y-11545) (Yeast).